The sequence spans 156 residues: ATP synthase subunit b (156 aa).

The helical transmembrane segment at 7 to 27 threads the bilayer; that stretch reads IFFQMLVFFVLGWFTMKFVWP.

Belongs to the ATPase B chain family. In terms of assembly, F-type ATPases have 2 components, F(1) - the catalytic core - and F(0) - the membrane proton channel. F(1) has five subunits: alpha(3), beta(3), gamma(1), delta(1), epsilon(1). F(0) has three main subunits: a(1), b(2) and c(10-14). The alpha and beta chains form an alternating ring which encloses part of the gamma chain. F(1) is attached to F(0) by a central stalk formed by the gamma and epsilon chains, while a peripheral stalk is formed by the delta and b chains.

Its subcellular location is the cell inner membrane. Its function is as follows. F(1)F(0) ATP synthase produces ATP from ADP in the presence of a proton or sodium gradient. F-type ATPases consist of two structural domains, F(1) containing the extramembraneous catalytic core and F(0) containing the membrane proton channel, linked together by a central stalk and a peripheral stalk. During catalysis, ATP synthesis in the catalytic domain of F(1) is coupled via a rotary mechanism of the central stalk subunits to proton translocation. Component of the F(0) channel, it forms part of the peripheral stalk, linking F(1) to F(0). The chain is ATP synthase subunit b from Bordetella pertussis (strain Tohama I / ATCC BAA-589 / NCTC 13251).